Consider the following 363-residue polypeptide: Sensor protein BasS (363 aa).

Residues 1 to 13 (MHFLRRPISLRQR) are Cytoplasmic-facing. A helical transmembrane segment spans residues 14–34 (LILTIGAILLVFELISVFWLW). Topologically, residues 35–64 (HESTEQIQLFEQALRDNRNNDRHIMREIRE) are periplasmic. A helical transmembrane segment spans residues 65-88 (AVASLIVPGVFMVSLTLFICYQAV). Positions 89 to 141 (RRITRPLAELQKELEARTADNLTPIAIHSATLEIEAVVSALNDLVSRLTSTLD) constitute an HAMP domain. The Cytoplasmic segment spans residues 89–363 (RRITRPLAEL…KKDQYVANQI (275 aa)). The 209-residue stretch at 149-357 (DVAHELRTPL…RAWVRLKKDQ (209 aa)) folds into the Histidine kinase domain. Residue H152 is modified to Phosphohistidine; by autocatalysis.

In terms of processing, autophosphorylated.

It is found in the cell inner membrane. It catalyses the reaction ATP + protein L-histidine = ADP + protein N-phospho-L-histidine.. Its function is as follows. Member of the two-component regulatory system BasS/BasR Autophosphorylates and activates BasR by phosphorylation. The polypeptide is Sensor protein BasS (basS) (Escherichia coli (strain K12)).